A 391-amino-acid chain; its full sequence is Phosphoglycerate kinase (391 aa).

Residues 21–23 (DLN), Arg-36, 59–62 (HLGR), Arg-113, and Arg-146 each bind substrate. ATP contacts are provided by residues Lys-197, Glu-319, and 345–348 (GGDT).

It belongs to the phosphoglycerate kinase family. As to quaternary structure, monomer.

It is found in the cytoplasm. The catalysed reaction is (2R)-3-phosphoglycerate + ATP = (2R)-3-phospho-glyceroyl phosphate + ADP. It participates in carbohydrate degradation; glycolysis; pyruvate from D-glyceraldehyde 3-phosphate: step 2/5. In Shewanella sediminis (strain HAW-EB3), this protein is Phosphoglycerate kinase.